Consider the following 209-residue polypeptide: DNA ADP-ribosyl transferase (209 aa).

The 201-residue stretch at 9–209 folds into the DarT domain; that stretch reads TPIYHITHID…RVCIRKDWYY (201 aa). NAD(+) is bound by residues 13 to 15, Gly22, and Leu30; that span reads HIT. An NAD(+)-binding element region spans residues 35 to 53; that stretch reads SPPKQRSIAYAHIQERRNR. Residues 44-50 mediate DNA binding; that stretch reads YAHIQER. Residue Arg51 participates in NAD(+) binding. Arg51 serves as the catalytic Proton acceptor. 3 consecutive DNA-binding regions follow at residues 75 to 80, 145 to 148, and 154 to 158; these read RSPMLY, SYWA, and REKKQ. The interval 116–160 is ADP-ribosylating turn-turn loop; the sequence is TDRHGVLSHARFFRQLEELAQLDWEAIQASYWADPPELREKKQAE. The active site involves Glu160.

It belongs to the DarT ADP-ribosyltransferase family. As to quaternary structure, interacts with cognate antitoxin DarG (via C-terminus); this heterodimeric complex neutralizes the toxic effect of DarT by preventing ssDNA binding to DarT and consequently inactivating the toxin by direct protein-protein interactions.

The catalysed reaction is a thymidine in DNA + NAD(+) = an N-(ADP-alpha-D-ribosyl)-thymidine in DNA + nicotinamide + H(+). Its function is as follows. Toxic component of the hybrid type II/IV toxin-antitoxin (TA) system DarTG, which plays a crucial role in controlling bacterial growth and bacteriophage infection. In case of phage infection, DarT toxin ADP-ribosylates DNA, which inhibits both viral DNA and RNA synthesis and leads to abortive infection. ADP-ribosylates ssDNA on the second thymidine of the consensus sequence 5'-TNTC-3'; the protein does not auto-modify. Arg-51 is highly flexible, allowing it to assume multiple positions in the crystal structures. Its toxic effect is neutralized by cognate antitoxin DarG. The polypeptide is DNA ADP-ribosyl transferase (Thermus sp. (strain 2.9)).